Here is a 239-residue protein sequence, read N- to C-terminus: RNA polymerase sigma-E factor (239 aa).

Residues 1 to 29 (MKKLKLRLTHLWYKLLMKLGLKSDEVYYI) constitute a propeptide, removed by SpoIIGA. The Polymerase core binding motif lies at 86–99 (DLISIGTIGLIKAV). The H-T-H motif DNA-binding region spans 206 to 225 (QKDVADMMGISQSYISRLEK).

Belongs to the sigma-70 factor family. Post-translationally, proteolytically cleaved in the N-terminus by SpoIIGA to yield the active peptide.

Functionally, sigma factors are initiation factors that promote the attachment of RNA polymerase to specific initiation sites and are then released. This sigma factor is responsible for the expression of sporulation specific genes. This Bacillus subtilis (strain 168) protein is RNA polymerase sigma-E factor (sigE).